Reading from the N-terminus, the 188-residue chain is Protein SYC1 (188 aa).

As to quaternary structure, component of the cleavage and polyadenylation factor (CPF) complex, which is composed of at least PTI1, SYC1, SSU72, GLC7, MPE1, REF2, PFS2, PTA1, YSH1/BRR5, SWD2, CFT2/YDH1, YTH1, CFT1/YHH1, FIP1 and PAP1. Component of the APT complex, which is a subcomplex of CPF, and is composed of PTI1, SYC1, SSU72, GLC7, REF2, PTA1 and SWD2.

Its subcellular location is the nucleus. Functionally, component of the cleavage and polyadenylation factor (CPF) complex, which plays a key role in polyadenylation-dependent pre-mRNA 3'-end formation and cooperates with cleavage factors including the CFIA complex and NAB4/CFIB. Component of the APT complex, which may be involved in polyadenylation-independent transcript 3'-end formation, including snoRNAs and snRNAs. The chain is Protein SYC1 (SYC1) from Saccharomyces cerevisiae (strain ATCC 204508 / S288c) (Baker's yeast).